A 112-amino-acid chain; its full sequence is Photosystem II reaction center Psb28 protein (112 aa).

Belongs to the Psb28 family. Part of the photosystem II complex.

The protein resides in the cellular thylakoid membrane. The protein is Photosystem II reaction center Psb28 protein of Synechocystis sp. (strain ATCC 27184 / PCC 6803 / Kazusa).